The sequence spans 201 residues: Osmotically-inducible protein Y (201 aa).

An N-terminal signal peptide occupies residues 1–28 (MTMTRLKISKTLLAVMLTSAVATGSAYA). BON domains are found at residues 55-123 (DDSA…HVRD) and 134-201 (GDTA…LKTK).

Its subcellular location is the periplasm. The sequence is that of Osmotically-inducible protein Y (osmY) from Escherichia coli (strain K12).